A 156-amino-acid chain; its full sequence is Ribosomal RNA large subunit methyltransferase H (156 aa).

S-adenosyl-L-methionine contacts are provided by residues Leu73, Gly104, and 123–128 (LSSLTL).

It belongs to the RNA methyltransferase RlmH family. As to quaternary structure, homodimer.

It is found in the cytoplasm. It catalyses the reaction pseudouridine(1915) in 23S rRNA + S-adenosyl-L-methionine = N(3)-methylpseudouridine(1915) in 23S rRNA + S-adenosyl-L-homocysteine + H(+). Its function is as follows. Specifically methylates the pseudouridine at position 1915 (m3Psi1915) in 23S rRNA. This is Ribosomal RNA large subunit methyltransferase H from Neisseria gonorrhoeae (strain ATCC 700825 / FA 1090).